Reading from the N-terminus, the 216-residue chain is Ethylene-inducing xylanase (216 aa).

An N-terminal signal peptide occupies residues 1–19 (MVSFSSLFVAACAAVTAFA). The GH11 domain occupies 28 to 216 (AITTSQQGTS…SSGSSDITVS (189 aa)). Catalysis depends on glutamate 112, which acts as the Nucleophile. Glutamate 203 functions as the Proton donor in the catalytic mechanism.

Belongs to the glycosyl hydrolase 11 (cellulase G) family.

It localises to the secreted. It catalyses the reaction Endohydrolysis of (1-&gt;4)-beta-D-xylosidic linkages in xylans.. Its pathway is glycan degradation; xylan degradation. Endo-1,4-beta-xylanase involved in the hydrolysis of xylan, a major structural heterogeneous polysaccharide found in plant biomass representing the second most abundant polysaccharide in the biosphere, after cellulose. Acts as a pathogen-associated molecular pattern (PAMP) that can trigger plant cell death. Triggers a series of immune responses in citrus fruit and enhanced the resistance of citrus and other fruit against fungal pathogens. This Penicillium digitatum (strain Pd1 / CECT 20795) (Green mold) protein is Ethylene-inducing xylanase.